The chain runs to 58 residues: Photosystem II reaction center protein K (58 aa).

A propeptide spanning residues 1–21 (MFNAYLDTVLDLSANGTVILA) is cleaved from the precursor. The helical transmembrane segment at 29 to 49 (IFDPIVDVMPIIPVFFLLLAF) threads the bilayer.

Belongs to the PsbK family. In terms of assembly, PSII is composed of 1 copy each of membrane proteins PsbA, PsbB, PsbC, PsbD, PsbE, PsbF, PsbH, PsbI, PsbJ, PsbK, PsbL, PsbM, PsbT, PsbX, PsbY, PsbZ, Psb30/Ycf12, at least 3 peripheral proteins of the oxygen-evolving complex and a large number of cofactors. It forms dimeric complexes.

It localises to the plastid. The protein resides in the chloroplast thylakoid membrane. Its function is as follows. One of the components of the core complex of photosystem II (PSII). PSII is a light-driven water:plastoquinone oxidoreductase that uses light energy to abstract electrons from H(2)O, generating O(2) and a proton gradient subsequently used for ATP formation. It consists of a core antenna complex that captures photons, and an electron transfer chain that converts photonic excitation into a charge separation. The sequence is that of Photosystem II reaction center protein K from Staurastrum punctulatum (Green alga).